Reading from the N-terminus, the 77-residue chain is Large ribosomal subunit protein bL28 (77 aa).

It belongs to the bacterial ribosomal protein bL28 family.

The chain is Large ribosomal subunit protein bL28 from Cupriavidus necator (strain ATCC 17699 / DSM 428 / KCTC 22496 / NCIMB 10442 / H16 / Stanier 337) (Ralstonia eutropha).